The primary structure comprises 412 residues: Multifunctional CCA protein (412 aa).

Positions 8 and 11 each coordinate ATP. Positions 8 and 11 each coordinate CTP. The Mg(2+) site is built by D21 and D23. ATP is bound by residues R91, R138, and R141. Residues R91, R138, and R141 each contribute to the CTP site. Residues 229 to 334 enclose the HD domain; sequence RGQHTLLALQ…LELFNQLDVW (106 aa).

This sequence belongs to the tRNA nucleotidyltransferase/poly(A) polymerase family. Bacterial CCA-adding enzyme type 1 subfamily. In terms of assembly, monomer. Can also form homodimers and oligomers. Requires Mg(2+) as cofactor. It depends on Ni(2+) as a cofactor.

It catalyses the reaction a tRNA precursor + 2 CTP + ATP = a tRNA with a 3' CCA end + 3 diphosphate. The catalysed reaction is a tRNA with a 3' CCA end + 2 CTP + ATP = a tRNA with a 3' CCACCA end + 3 diphosphate. Catalyzes the addition and repair of the essential 3'-terminal CCA sequence in tRNAs without using a nucleic acid template. Adds these three nucleotides in the order of C, C, and A to the tRNA nucleotide-73, using CTP and ATP as substrates and producing inorganic pyrophosphate. tRNA 3'-terminal CCA addition is required both for tRNA processing and repair. Also involved in tRNA surveillance by mediating tandem CCA addition to generate a CCACCA at the 3' terminus of unstable tRNAs. While stable tRNAs receive only 3'-terminal CCA, unstable tRNAs are marked with CCACCA and rapidly degraded. The chain is Multifunctional CCA protein from Haemophilus ducreyi (strain 35000HP / ATCC 700724).